Consider the following 157-residue polypeptide: Protein Smg homolog (157 aa).

It belongs to the Smg family.

The chain is Protein Smg homolog from Shewanella pealeana (strain ATCC 700345 / ANG-SQ1).